The sequence spans 64 residues: Large ribosomal subunit protein bL35 (64 aa).

The segment at 1-31 is disordered; it reads MPKMKTHSGAKKRFKLTGTGKLKRQQANRRH.

The protein belongs to the bacterial ribosomal protein bL35 family.

The polypeptide is Large ribosomal subunit protein bL35 (Paenarthrobacter aurescens (strain TC1)).